The sequence spans 429 residues: Adenylosuccinate synthetase (429 aa).

GTP is bound by residues 13-19 and 41-43; these read GDEGKGK and GHT. Asp-14 acts as the Proton acceptor in catalysis. Mg(2+)-binding residues include Asp-14 and Gly-41. IMP-binding positions include 14–17, 39–42, Thr-130, Arg-144, Gln-225, Thr-240, and Arg-304; these read DEGK and NAGH. His-42 functions as the Proton donor in the catalytic mechanism. Residue 300 to 306 coordinates substrate; that stretch reads ATTGRAR. GTP contacts are provided by residues Arg-306, 332 to 334, and 414 to 416; these read KLD and STG.

The protein belongs to the adenylosuccinate synthetase family. In terms of assembly, homodimer. Mg(2+) serves as cofactor.

It localises to the cytoplasm. The catalysed reaction is IMP + L-aspartate + GTP = N(6)-(1,2-dicarboxyethyl)-AMP + GDP + phosphate + 2 H(+). It participates in purine metabolism; AMP biosynthesis via de novo pathway; AMP from IMP: step 1/2. In terms of biological role, plays an important role in the de novo pathway of purine nucleotide biosynthesis. Catalyzes the first committed step in the biosynthesis of AMP from IMP. This is Adenylosuccinate synthetase from Acidithiobacillus ferrooxidans (Thiobacillus ferrooxidans).